The sequence spans 350 residues: Protein RecA (350 aa).

68–75 (GPESSGKT) lines the ATP pocket.

The protein belongs to the RecA family.

The protein resides in the cytoplasm. Can catalyze the hydrolysis of ATP in the presence of single-stranded DNA, the ATP-dependent uptake of single-stranded DNA by duplex DNA, and the ATP-dependent hybridization of homologous single-stranded DNAs. It interacts with LexA causing its activation and leading to its autocatalytic cleavage. The chain is Protein RecA from Mycolicibacterium vanbaalenii (strain DSM 7251 / JCM 13017 / BCRC 16820 / KCTC 9966 / NRRL B-24157 / PYR-1) (Mycobacterium vanbaalenii).